Consider the following 145-residue polypeptide: Lipoprotein signal peptidase (145 aa).

The next 3 helical transmembrane spans lie at 1–21 (MVYI…LLVM), 57–77 (YLFI…YYKT), and 79–99 (GSGM…GNLI). Catalysis depends on residues D109 and D123. The chain crosses the membrane as a helical span at residues 115 to 135 (IWPVFNLADSSVVIGAALLIL).

It belongs to the peptidase A8 family.

It localises to the cell inner membrane. The catalysed reaction is Release of signal peptides from bacterial membrane prolipoproteins. Hydrolyzes -Xaa-Yaa-Zaa-|-(S,diacylglyceryl)Cys-, in which Xaa is hydrophobic (preferably Leu), and Yaa (Ala or Ser) and Zaa (Gly or Ala) have small, neutral side chains.. The protein operates within protein modification; lipoprotein biosynthesis (signal peptide cleavage). In terms of biological role, this protein specifically catalyzes the removal of signal peptides from prolipoproteins. This is Lipoprotein signal peptidase from Halothermothrix orenii (strain H 168 / OCM 544 / DSM 9562).